The following is a 445-amino-acid chain: MTEYLSVSALTKYIKYKFDQDPHLQSVLIKGELSNFKKHSSGHLYFNVKDKESVISAMMFKGNASKLGFEPKEGDEVLIEARVSVYERRGNYQIYVNKMQLDGIGNLYQKLELLKKKLKKEGYFNQSNKKLIPKYPKKIAVLTASTGAAIRDIHSTINNRYPLVEQIQISTLVQGTQARQDIIEKIQYADSLDVDTIIVGRGGGSIEDLWNFNEEDVVKTIFNCQTPIISAVGHETDFTLSDFVADVRAATPTQAAVIATPDQYELLQQIKQYEYTLSRYIKQYIEHQKKQLNHISSYYKFKQPSLLYDQQIQKRDELERQLNHLLNTKVEKSKHHLKLLQQSFNFKNLNQQITQEKQSIYQLHSRLSKIMSNNITNLKTVLKNKLESLNNLSPTNTMLRGYAIVNKDNEVVTSTHKLNENDQISLTMKDGSVDATVKKVRCNDE.

This sequence belongs to the XseA family. As to quaternary structure, heterooligomer composed of large and small subunits.

It is found in the cytoplasm. It carries out the reaction Exonucleolytic cleavage in either 5'- to 3'- or 3'- to 5'-direction to yield nucleoside 5'-phosphates.. Its function is as follows. Bidirectionally degrades single-stranded DNA into large acid-insoluble oligonucleotides, which are then degraded further into small acid-soluble oligonucleotides. The chain is Exodeoxyribonuclease 7 large subunit from Staphylococcus epidermidis (strain ATCC 12228 / FDA PCI 1200).